The following is a 736-amino-acid chain: MKKNFSRIVSIVAFSSLLGGMAFAQPAERGRNPQVRLLSAEQSMSKVQFRMDNLQFTDVQTSKGVAQVPTFTEGVNISEKGTPILPILSRSLAVSETRAMKVEVVSSKFIEKKDVLIAPSKGVISRAENPDQIPYVYGQSYNEDKFFPGEIATLSDPFILRDVRGQVVNFAPLQYNPVTKTLRIYTEIVVAVSETAEAGQNTISLVKNSTFTGFEDIYKSVFMNYEATRYTPVEEKENGRMIVIVAKKYEGDIKDFVDWKNQRGLRTEVKVAEDIASPVTANAIQQFVKQEYEKEGNDLTYVLLVGDHKDIPAKITPGIKSDQVYGQIVGNDHYNEVFIGRFSCESKEDLKTQIDRTIHYERNITTEDKWLGQALCIASAEGGPSADNGESDIQHENVIANLLTQYGYTKIIKCYDPGVTPKNIIDAFNGGISLVNYTGHGSETAWGTSHFGTTHVKQLTNSNQLPFIFDVACVNGDFLFSMPCFAEALMRAQKDGKPTGTVAIIASTINQSWASPMRGQDEMNEILCEKHPNNIKRTFGGVTMNGMFAMVEKYKKDGEKMLDTWTVFGDPSLLVRTLVPTEMQVTAPANISASAQTFEVACDYNGAIATLSDDGDMVGTAIVKDGKAIIKLNESIADETNLTLTVVGYNKVTVIKDVKVEGTSIADVANDKPYTVAVSGKTITVESPAAGLTIFDMNGRRVATAKNRMVFEAQNGVYAVRIATEGKTYTEKVIVK.

A signal peptide spans 1 to 24 (MKKNFSRIVSIVAFSSLLGGMAFA). Positions 25-229 (QPAERGRNPQ…SVFMNYEATR (205 aa)) are excised as a propeptide. Residues Asp307, Val329, Asp332, Tyr334, Glu336, Glu390, and His395 each coordinate Ca(2+). His440 serves as the catalytic Proton donor. The active-site Nucleophile is Cys473. Phe478, Glu487, Asp521, Glu522, Glu525, His531, Asp613, and Glu639 together coordinate Ca(2+).

It belongs to the peptidase C25 family.

The protein resides in the secreted. The enzyme catalyses Hydrolysis of proteins and small molecule substrates, with a preference for Arg in P1.. Its function is as follows. Thiol protease. Acts synergistically with RgpA to catalyze the maturation of fimbrial subunits, such as FimA. Its proteolytic activity is a major factor in both periodontal tissue destruction and in evasion of host defense mechanisms. This chain is Gingipain R2, found in Porphyromonas gingivalis (strain ATCC 33277 / DSM 20709 / CIP 103683 / JCM 12257 / NCTC 11834 / 2561).